The following is a 390-amino-acid chain: Chorismate synthase (390 aa).

R39 and R45 together coordinate NADP(+). Residues 132–134 (RSS), 253–254 (NA), G298, 313–317 (KPIPT), and R339 contribute to the FMN site.

Belongs to the chorismate synthase family. In terms of assembly, homotetramer. FMNH2 serves as cofactor.

It carries out the reaction 5-O-(1-carboxyvinyl)-3-phosphoshikimate = chorismate + phosphate. The protein operates within metabolic intermediate biosynthesis; chorismate biosynthesis; chorismate from D-erythrose 4-phosphate and phosphoenolpyruvate: step 7/7. Catalyzes the anti-1,4-elimination of the C-3 phosphate and the C-6 proR hydrogen from 5-enolpyruvylshikimate-3-phosphate (EPSP) to yield chorismate, which is the branch point compound that serves as the starting substrate for the three terminal pathways of aromatic amino acid biosynthesis. This reaction introduces a second double bond into the aromatic ring system. The protein is Chorismate synthase of Shouchella clausii (strain KSM-K16) (Alkalihalobacillus clausii).